A 160-amino-acid polypeptide reads, in one-letter code: Major pollen allergen Aln g 1 (160 aa).

Belongs to the BetVI family.

The chain is Major pollen allergen Aln g 1 from Alnus glutinosa (European alder).